Reading from the N-terminus, the 529-residue chain is MLMLLVRGTRYENHRPKVTLPTPLGGRSNEATVCESPSPDTGIRWRRSDEALRVNVGGVRRLLSARALARFPGTRLGRLQAAASEEQARRLCDDYDAAAREFYFDRHPGFFLGLLHFYRTGHLHVLDELCVFAFGQEADYWGLGENALAACCRARYLERRVTRPRAWDEDSDTPSSVDPCPDEISDVQRELARYGAARCGRLRRRLWLTMENPGYSLPSKLFSCVSISVVLASIAAMCIHSLPEYQAREAAAAVAAVAAGRSAEGVRDDPVLRRLEYFCIAWFSFEVSSRLLLAPSTRNFFCHPLNLIDIVSVLPFYLTLLAGAALGDHGGTGGKEFGHLGKVVQVFRLMRIFRVLKLARHSTGLRSLGATLKHSYREVGILLLYLAVGVSVFSGVAYTAEKEEHVGFDTIPACWWWGTVSMTTVGYGDVVPVTVAGKLAASGCILGGILVVALPITIIFNKFSHFYRRQKALEAAVRNSNHQEFEDLLSSVDGVSEASLETSRETSQEGRSADLETQVPSEPPHSQMY.

Topologically, residues 1 to 217 (MLMLLVRGTR…LTMENPGYSL (217 aa)) are cytoplasmic. Residues 218 to 239 (PSKLFSCVSISVVLASIAAMCI) form a helical membrane-spanning segment. Topologically, residues 240-270 (HSLPEYQAREAAAAVAAVAAGRSAEGVRDDP) are extracellular. A helical membrane pass occupies residues 271–293 (VLRRLEYFCIAWFSFEVSSRLLL). Residues 294-304 (APSTRNFFCHP) are Cytoplasmic-facing. Residues 305–322 (LNLIDIVSVLPFYLTLLA) form a helical membrane-spanning segment. Residues 323–340 (GAALGDHGGTGGKEFGHL) are Extracellular-facing. The chain crosses the membrane as a helical; Voltage-sensor span at residues 341–361 (GKVVQVFRLMRIFRVLKLARH). Topologically, residues 362-376 (STGLRSLGATLKHSY) are cytoplasmic. Residues 377 to 398 (REVGILLLYLAVGVSVFSGVAY) traverse the membrane as a helical segment. Topologically, residues 399-411 (TAEKEEHVGFDTI) are extracellular. Positions 412 to 423 (PACWWWGTVSMT) form an intramembrane region, helical. The short motif at 424-429 (TVGYGD) is the Selectivity filter element. An intramembrane segment occupies 424-431 (TVGYGDVV). Over 432–438 (PVTVAGK) the chain is Extracellular. A helical transmembrane segment spans residues 439–467 (LAASGCILGGILVVALPITIIFNKFSHFY). Residues 468 to 529 (RRQKALEAAV…PSEPPHSQMY (62 aa)) are Cytoplasmic-facing. Positions 494-529 (GVSEASLETSRETSQEGRSADLETQVPSEPPHSQMY) are disordered. Residues 502-514 (TSRETSQEGRSAD) are compositionally biased toward basic and acidic residues.

It belongs to the potassium channel family. S (TC 1.A.1.2) subfamily. Kv9.1/KCNS1 sub-subfamily. As to quaternary structure, heterotetramer with KCNB1. Heterotetramer with KCNB2. Does not form homomultimers.

It localises to the cell membrane. Its function is as follows. Potassium channel regulatory subunit that modulate the delayed rectifier voltage-gated potassium channel activity of KCNB1 and KCNB2 by altering their kinetics, expression levels, and shifting the half-inactivation potential to more polarized values. While it does not form functional channels on its own, it can form functional heterotetrameric channels with KCNB1 and KCNB2. Each regulatory subunit has unique regulatory properties that can lead to extensive inhibition, significant changes in kinetics, and/or substantial shifts in the voltage dependencies of the inactivation process. The polypeptide is Delayed-rectifier potassium channel regulatory subunit KCNS1 (Aotus nancymaae (Ma's night monkey)).